The chain runs to 165 residues: Urease accessory protein UreE (165 aa).

The segment at 137–156 (EAGAYQSAPHGHSHAHGHDH) is disordered.

Belongs to the UreE family.

It is found in the cytoplasm. In terms of biological role, involved in urease metallocenter assembly. Binds nickel. Probably functions as a nickel donor during metallocenter assembly. The protein is Urease accessory protein UreE of Pseudomonas putida (strain GB-1).